A 288-amino-acid polypeptide reads, in one-letter code: Protease HtpX (288 aa).

2 consecutive transmembrane segments (helical) span residues Ile-5 to Leu-25 and Gly-35 to Ser-55. Position 140 (His-140) interacts with Zn(2+). The active site involves Glu-141. Position 144 (His-144) interacts with Zn(2+). 2 consecutive transmembrane segments (helical) span residues Leu-155–Ile-175 and Ile-194–Phe-214. Glu-219 serves as a coordination point for Zn(2+).

This sequence belongs to the peptidase M48B family. Zn(2+) is required as a cofactor.

The protein resides in the cell inner membrane. The chain is Protease HtpX from Stenotrophomonas maltophilia (strain K279a).